The sequence spans 583 residues: CTP synthase (583 aa).

The segment at 1–278 (MRKHPQTATK…DAYVVRRLNL (278 aa)) is amidoligase domain. S20 is a binding site for CTP. S20 serves as a coordination point for UTP. Residues 21–26 (SLGKGL) and D78 contribute to the ATP site. Residues D78 and E152 each contribute to the Mg(2+) site. Residues 159-161 (DIE), 199-204 (KTKPTQ), and K235 each bind CTP. UTP-binding positions include 199–204 (KTKPTQ) and K235. The Glutamine amidotransferase type-1 domain maps to 303-551 (RIALVGKYVE…VGAAMDYKAG (249 aa)). Residue G366 participates in L-glutamine binding. C393 acts as the Nucleophile; for glutamine hydrolysis in catalysis. L-glutamine-binding positions include 394–397 (LGLQ), E416, and R477. Residues H524 and E526 contribute to the active site. The disordered stretch occupies residues 560 to 583 (EQSSNGIQHRDSAARPIPEPAARG).

The protein belongs to the CTP synthase family. In terms of assembly, homotetramer.

It catalyses the reaction UTP + L-glutamine + ATP + H2O = CTP + L-glutamate + ADP + phosphate + 2 H(+). The enzyme catalyses L-glutamine + H2O = L-glutamate + NH4(+). The catalysed reaction is UTP + NH4(+) + ATP = CTP + ADP + phosphate + 2 H(+). Its pathway is pyrimidine metabolism; CTP biosynthesis via de novo pathway; CTP from UDP: step 2/2. Its activity is regulated as follows. Allosterically activated by GTP, when glutamine is the substrate; GTP has no effect on the reaction when ammonia is the substrate. The allosteric effector GTP functions by stabilizing the protein conformation that binds the tetrahedral intermediate(s) formed during glutamine hydrolysis. Inhibited by the product CTP, via allosteric rather than competitive inhibition. Catalyzes the ATP-dependent amination of UTP to CTP with either L-glutamine or ammonia as the source of nitrogen. Regulates intracellular CTP levels through interactions with the four ribonucleotide triphosphates. This is CTP synthase from Mycolicibacterium paratuberculosis (strain ATCC BAA-968 / K-10) (Mycobacterium paratuberculosis).